We begin with the raw amino-acid sequence, 513 residues long: Abl interactor 2 (513 aa).

The residue at position 40 (serine 40) is a Phosphoserine. The 63-residue stretch at 45 to 107 (RALEETKAYT…DIHKEKVARR (63 aa)) folds into the t-SNARE coiled-coil homology domain. The segment at 167–431 (KMGGLPRTTP…PPEDYEEEEA (265 aa)) is disordered. Residues 174-185 (TTPPTQKPPSPP) show a composition bias toward pro residues. Serine 183 and serine 227 each carry phosphoserine. Residues 217 to 241 (PTRNMAPSQQSPVRTASVNQRNRTY) are compositionally biased toward polar residues. Residues 242–272 (SSSGSSGGSHPSSRSSSRENSGSGSVGVPIA) are compositionally biased toward low complexity. Positions 273–282 (VPTPSPPSVF) are enriched in pro residues. Over residues 283 to 325 (PAPAGSAGTPPLPATSASAPAPLVPATVPSSTAPNAAAGGAPN) the composition is skewed to low complexity. Threonine 361 carries the post-translational modification Phosphothreonine. A Phosphoserine modification is found at serine 368. Polar residues predominate over residues 376 to 399 (SITSQTSLQNQMNGGPFYSQNPVS). The span at 400-409 (DTPPPPPPVE) shows a compositional bias: pro residues. An SH3 domain is found at 451 to 510 (SYLEKVVAIYDYTKDKEDELSFQEGAIIYVIKKNDDGWYEGVMNGVTGLFPGNYVESIMH).

The protein belongs to the ABI family. In terms of assembly, component of the WAVE complex composed of ABI2, CYFIP1 or CYFIP2, BRK1, NCKAP1 and WASF1/WAVE1. Within the complex, a heterodimer containing NCKAP1 and CYFIP1 interacts with a heterotrimer formed by WAVE1, ABI2 and BRK1. CYFIP2 binds to activated RAC1 which causes the complex to dissociate, releasing activated WASF1. Interacts (via SH3 domain) with ABL1 and ABL2. (Microbial infection) Interacts with human cytomegalovirus UL135. In terms of processing, phosphorylated by ABL1. Widely expressed. Abundant in testes, ovary, thymus, and colon, with lower but detectable levels in prostate, peripheral blood leukocytes, and spleen.

It localises to the cytoplasm. It is found in the nucleus. Its subcellular location is the cell projection. The protein resides in the lamellipodium. The protein localises to the filopodium. It localises to the cytoskeleton. It is found in the cell junction. Its subcellular location is the adherens junction. Functionally, regulator of actin cytoskeleton dynamics underlying cell motility and adhesion. Functions as a component of the WAVE complex, which activates actin nucleating machinery Arp2/3 to drive lamellipodia formation. Acts as a regulator and substrate of nonreceptor tyrosine kinases ABL1 and ABL2 involved in processes linked to cell growth and differentiation. Positively regulates ABL1-mediated phosphorylation of ENAH, which is required for proper polymerization of nucleated actin filaments at the leading edge. Contributes to the regulation of actin assembly at the tips of neuron projections. In particular, controls dendritic spine morphogenesis and may promote dendritic spine specification toward large mushroom-type spines known as repositories of memory in the brain. In hippocampal neurons, may mediate actin-dependent BDNF-NTRK2 early endocytic trafficking that triggers dendrite outgrowth. Participates in ocular lens morphogenesis, likely by regulating lamellipodia-driven adherens junction formation at the epithelial cell-secondary lens fiber interface. Also required for nascent adherens junction assembly in epithelial cells. The protein is Abl interactor 2 of Homo sapiens (Human).